A 408-amino-acid polypeptide reads, in one-letter code: MRTDSGARLEEGHLRPPRALPPVPSQDDIPLSRPKKKKPRTKNTPASASLEGLAQTAGRRPSEGNEPSTKELKEHPEAPVQRRQKKTRLPLELETSSTQKKSSSSSLLRNENGIDAEPAEEAVIQKPRRKTKKTQPAELQYANELGVEDEDIITDEQTTVEQQSVFTAPTGISQPVGKVFVEKSRRFQAADRSELIKTTENIDVSMDVKPSWTTRDVALTVHRAFRMIGLFSHGFLAGCAVWNIVVIYVLAGDQLSNLSNLLQQYKTLAYPFQSLLYLLLALSTISAFDRIDFAKISVAIRNFLALDPTALASFLYFTALILSLSQQMTSDRIHLYTPSSVNGSLWEAGIEEQILQPWIVVNLVVALLVGLSWLFLSYRPGMDLSEELMFSSEVEEYPDKEKEIKASS.

The span at 1–14 shows a compositional bias: basic and acidic residues; that stretch reads MRTDSGARLEEGHL. Residues 1 to 137 are disordered; the sequence is MRTDSGARLE…RRKTKKTQPA (137 aa). Phosphoserine occurs at positions 25 and 49. A compositionally biased stretch (basic and acidic residues) spans 60-77; the sequence is RPSEGNEPSTKELKEHPE. Residues 95 to 106 are compositionally biased toward low complexity; that stretch reads TSSTQKKSSSSS. The next 4 helical transmembrane spans lie at 227–247, 268–288, 303–323, and 358–378; these read MIGL…IVVI, LAYP…ISAF, FLAL…LILS, and WIVV…FLSY.

The protein belongs to the TMEM237 family. Part of the tectonic-like complex (also named B9 complex). Interacts with TMEM107.

The protein resides in the membrane. It is found in the cell projection. It localises to the cilium. Functionally, component of the transition zone in primary cilia. Required for ciliogenesis. The chain is Transmembrane protein 237 (TMEM237) from Homo sapiens (Human).